The chain runs to 1536 residues: MAPLLGRKPYPLVKPLSEPPGPGEEVYTIEHTKEAFRNKEEYEARLRRYGERIWTCKSTGSSQLTHKEAWEEEQEVTELLQEEYPVWFEKPVLEIVHHNTVPLDKLVDQVWVEILTKYAVGEKCDLMVGNDKTLSVEVVKIHPLENPPEENAEKKMEGACDSPSSDKENASQENLKKEPQSKEEESRRESLSDRARRSPRKLPTTMKEEKKKWVMPKFLPHKYDVKLVNEDKVISDVPADNLFRTERPPNKEIMRYFIRHYALRLGSGESAPWVVEDELVKKFSLPSKFSDFLLDPHKFLAENPSTKRKSLSSPEGKPRKRLKNVETGTGGEGAKGDKKKNKDSQNIPLSPTIWSHMQVKKVNGSPLKMKNSGTSKKSDEENVLGTPKSSKKQGDKKSSDPKRRRKSGLNKTPNSQRLSKKEDKSLGGAKKPRMKQMTLLDLAKSPAAAGSPKKQRRSSTTGSAKLGKPFPPMALHLLRFYKENKGKEDKKTTLSSLLSKAAKALSPEDRSRLPEELKELVQKRWELLEQKRRWALMSEEEKQSVLKQKRQEVKQKLREKAKERREKEMQVRREMSRRYEDQELEGKNLPAFRLFDMPEGLPNTIFGDVAMVVEFLHCYSGLLMPDDQYPITSIALLEALAGEKAGFLYLNRVLVVLLQTLLQDELAEGYSELDMPLSEIPLTMHSVSELVRLCLRPSDAHEEESARGSDDWQSGADFDDMVSSEFLEKLETAEVFELDPQEKVSLLLALCHRILMTYSVEDHVEAVHQKSAEMWKERVATLKEANDRKRAEKQKRKEQMETKTDGDVLIKAEKKKESTVKKETPKVLPKEEPEPEDMISTVKSRRLMSIQAKKEKEEQERLNKVRMEKEAEEERIRRQKAATEKAFQDAVTKAKLVLRRTPLGTDRNHNRYWLFSDVVPGLYIEKGWVHESIDYSFTLPPEEEPVLTEEEEEEEEVKKEEETEDGEKEDEGSIISASNDISQQGAPSHESSIETTVPKQGQNLWFVCDTPKDFDELLESLHPQGVRESELKIRLQINYQEILHSIHLTKKGNPGLKTCDGHQELLKFLRSDIIEVASRLQKGGLGYLEDTSEFEEFEERVKTLEKLPEFGECVIALQESVIKKFLQGFMAPKQKKKKKTGGEESTTAEEVDDQKKLAEEARVATAVEKWKTAVREAQTFSRMHVLLGMLDACIKWDMSAENARCKVCRRKGEDDKLILCDECNKAFHLFCLRPALYRIPAGEWLCPACQPTIARRSSRGRNYKEDSEEEEDSEEEDEEESEEEDSEEEHRNTGHSLRSRKKVKTSSKSKMQKKPAKPASRSASKTDTNPSKTSPKSSAKPKSRAAPSSPVDIDELVRQSSKPPSRKKDVELQKCEEILQKIMKFRHSWPFREPVSAEEAEDYQDVITSPMDLTTMQGKFKSSEYHSASDFIEDMKLIFSNAEEYNQPSSNVLTCMSRTEEAFVELLQKSLPGVSYLRRRTRKRAATPSDNSDDDDDDEEEDERSKKQKNGKQGKKASSKRKVEHSRTEKYQTKQK.

The region spanning 25 to 130 (EVYTIEHTKE…GEKCDLMVGN (106 aa)) is the WAC domain. Disordered regions lie at residues 144-207 (LENP…TTMK), 304-470 (PSTK…GKPF), and 557-579 (LREK…SRRY). Basic and acidic residues-rich tracts occupy residues 151 to 196 (NAEK…DRAR) and 334 to 343 (AKGDKKKNKD). The span at 344-355 (SQNIPLSPTIWS) shows a compositional bias: polar residues. Residues 392–401 (KQGDKKSSDP) show a composition bias toward basic and acidic residues. Residues 443–452 (AKSPAAAGSP) are compositionally biased toward low complexity. The stretch at 515-583 (EELKELVQKR…EMSRRYEDQE (69 aa)) forms a coiled coil. One can recognise a DDT domain in the interval 603-667 (NTIFGDVAMV…LQTLLQDELA (65 aa)). Coiled-coil stretches lie at residues 768–803 (HQKS…METK) and 850–890 (IQAK…FQDA). A compositionally biased stretch (basic and acidic residues) spans 785–832 (ANDRKRAEKQKRKEQMETKTDGDVLIKAEKKKESTVKKETPKVLPKEE). The interval 785–839 (ANDRKRAEKQKRKEQMETKTDGDVLIKAEKKKESTVKKETPKVLPKEEPEPEDMI) is disordered. Positions 940–973 (PPEEEPVLTEEEEEEEEVKKEEETEDGEKEDEGS) are disordered. 2 stretches are compositionally biased toward acidic residues: residues 941–955 (PEEE…EEEE) and 962–972 (ETEDGEKEDEG). The segment at 1202–1252 (NARCKVCRRKGEDDKLILCDECNKAFHLFCLRPALYRIPAGEWLCPACQPT) adopts a PHD-type zinc-finger fold. Disordered regions lie at residues 1256 to 1371 (RSSR…KDVE) and 1477 to 1536 (LRRR…TKQK). Residues 1261–1293 (RNYKEDSEEEEDSEEEDEEESEEEDSEEEHRNT) are a coiled coil. Residues 1266–1287 (DSEEEEDSEEEDEEESEEEDSE) show a composition bias toward acidic residues. Residues 1297–1316 (LRSRKKVKTSSKSKMQKKPA) are compositionally biased toward basic residues. A compositionally biased stretch (low complexity) spans 1325–1350 (KTDTNPSKTSPKSSAKPKSRAAPSSP). A Phosphoserine modification is found at Ser-1349. The Bromo domain occupies 1366–1470 (RKKDVELQKC…EAFVELLQKS (105 aa)). Positions 1491–1502 (NSDDDDDDEEED) are enriched in acidic residues. Basic residues predominate over residues 1506–1524 (KKQKNGKQGKKASSKRKVE). Over residues 1525–1536 (HSRTEKYQTKQK) the composition is skewed to basic and acidic residues.

It belongs to the WAL family. BAZ1B subfamily. In terms of assembly, interacts with smarca5/snf2h; the interaction is direct and forms the WICH complex. Component of the B-WICH complex. Mn(2+) serves as cofactor.

The protein resides in the nucleus. It catalyses the reaction L-tyrosyl-[protein] + ATP = O-phospho-L-tyrosyl-[protein] + ADP + H(+). Functionally, atypical tyrosine-protein kinase that plays a central role in chromatin remodeling and acts as a transcription regulator. Involved in DNA damage response by phosphorylating 'Tyr-142' of histone H2AX (H2AXY142ph). H2AXY142ph plays a central role in DNA repair and acts as a mark that distinguishes between apoptotic and repair responses to genotoxic stress. Essential component of the WICH complex, a chromatin remodeling complex that mobilizes nucleosomes and reconfigures irregular chromatin to a regular nucleosomal array structure. The WICH complex regulates the transcription of various genes, has a role in RNA polymerase I and RNA polymerase III transcription, mediates the histone H2AX phosphorylation at 'Tyr-142', and is involved in the maintenance of chromatin structures during DNA replication processes. This chain is Tyrosine-protein kinase BAZ1B (baz1b), found in Danio rerio (Zebrafish).